The sequence spans 216 residues: MOB kinase activator 3C (216 aa).

Cysteine 82, cysteine 87, histidine 164, and histidine 169 together coordinate Zn(2+).

This sequence belongs to the MOB1/phocein family.

May regulate the activity of kinases. This is MOB kinase activator 3C (MOB3C) from Bos taurus (Bovine).